The chain runs to 180 residues: 3-phenylpropionate/cinnamic acid dioxygenase subunit beta (180 aa).

It belongs to the bacterial ring-hydroxylating dioxygenase beta subunit family. In terms of assembly, this dioxygenase system consists of four proteins: the two subunits of the hydroxylase component (HcaE and HcaF), a ferredoxin (HcaC) and a ferredoxin reductase (HcaD).

It carries out the reaction 3-phenylpropanoate + NADH + O2 + H(+) = 3-(cis-5,6-dihydroxycyclohexa-1,3-dien-1-yl)propanoate + NAD(+). It catalyses the reaction (E)-cinnamate + NADH + O2 + H(+) = (2E)-3-(cis-5,6-dihydroxycyclohexa-1,3-dien-1-yl)prop-2-enoate + NAD(+). Its pathway is aromatic compound metabolism; 3-phenylpropanoate degradation. Part of the multicomponent 3-phenylpropionate dioxygenase. Converts 3-phenylpropionic acid (PP) and cinnamic acid (CI) into 3-phenylpropionate-dihydrodiol (PP-dihydrodiol) and cinnamic acid-dihydrodiol (CI-dihydrodiol), respectively. The protein is 3-phenylpropionate/cinnamic acid dioxygenase subunit beta of Photorhabdus laumondii subsp. laumondii (strain DSM 15139 / CIP 105565 / TT01) (Photorhabdus luminescens subsp. laumondii).